We begin with the raw amino-acid sequence, 96 residues long: Large ribosomal subunit protein bL28 (96 aa).

Residues 1–22 (MSRSCELTGKGVQSGNNVSHAN) show a composition bias toward polar residues. Residues 1 to 24 (MSRSCELTGKGVQSGNNVSHANNK) are disordered.

Belongs to the bacterial ribosomal protein bL28 family.

The polypeptide is Large ribosomal subunit protein bL28 (Rhizobium meliloti (strain 1021) (Ensifer meliloti)).